A 208-amino-acid polypeptide reads, in one-letter code: FMN-dependent NADH:quinone oxidoreductase (208 aa).

Residues Ser9, 15–17, 96–99, and 140–143 contribute to the FMN site; these read SVS, MYNF, and TRGG.

This sequence belongs to the azoreductase type 1 family. Homodimer. It depends on FMN as a cofactor.

The enzyme catalyses 2 a quinone + NADH + H(+) = 2 a 1,4-benzosemiquinone + NAD(+). The catalysed reaction is N,N-dimethyl-1,4-phenylenediamine + anthranilate + 2 NAD(+) = 2-(4-dimethylaminophenyl)diazenylbenzoate + 2 NADH + 2 H(+). Quinone reductase that provides resistance to thiol-specific stress caused by electrophilic quinones. Functionally, also exhibits azoreductase activity. Catalyzes the reductive cleavage of the azo bond in aromatic azo compounds to the corresponding amines. In Azospirillum brasilense, this protein is FMN-dependent NADH:quinone oxidoreductase.